Reading from the N-terminus, the 217-residue chain is 3,4-dihydroxy-2-butanone 4-phosphate synthase (217 aa).

D-ribulose 5-phosphate is bound by residues 40–41 (RE), D45, 153–157 (RRGHT), and E177. E41 is a binding site for Mg(2+). H156 lines the Mg(2+) pocket.

This sequence belongs to the DHBP synthase family. Homodimer. The cofactor is Mg(2+). Mn(2+) is required as a cofactor.

The catalysed reaction is D-ribulose 5-phosphate = (2S)-2-hydroxy-3-oxobutyl phosphate + formate + H(+). The protein operates within cofactor biosynthesis; riboflavin biosynthesis; 2-hydroxy-3-oxobutyl phosphate from D-ribulose 5-phosphate: step 1/1. Functionally, catalyzes the conversion of D-ribulose 5-phosphate to formate and 3,4-dihydroxy-2-butanone 4-phosphate. The polypeptide is 3,4-dihydroxy-2-butanone 4-phosphate synthase (Aliivibrio fischeri (Vibrio fischeri)).